Reading from the N-terminus, the 1190-residue chain is Wings apart-like protein homolog (1190 aa).

Disordered regions lie at residues 1-23 (MTSR…FDEV) and 46-82 (QKRP…DESL). A mediates interaction with the cohesin complex region spans residues 1-659 (MTSRFGKTYS…ENQEFTDDIE (659 aa)). The segment covering 54–66 (DIQEIPKKPKVEE) has biased composition (basic and acidic residues). Positions 73–75 (FGF) match the FGF motif 1 motif. S77 carries the post-translational modification Phosphoserine. K168 is subject to N6-acetyllysine. A phosphoserine mark is found at S221, S223, and S226. Residues 260 to 286 (LLEMKDDDFKNRLENLNEAIEEDIVQS) are a coiled coil. 2 positions are modified to phosphoserine: S347 and S380. The short motif at 429-431 (FGF) is the FGF motif 2 element. S443 is modified (phosphoserine). An FGF motif 3 motif is present at residues 453 to 455 (FGF). Phosphoserine occurs at positions 459 and 461. Residues 459–469 (SESEDDEDDDC) show a composition bias toward acidic residues. Residues 459-553 (SESEDDEDDD…SGPKRSPTKA (95 aa)) form a disordered region. A compositionally biased stretch (polar residues) spans 494 to 509 (SNDNSQDSQSGTNNAE). The segment covering 531 to 540 (QGDKSKENTR) has biased composition (basic and acidic residues). The WAPL domain maps to 626 to 1169 (RREDKELYTV…KKFLSFMNLT (544 aa)). Positions 749-782 (ELEQDASSAKLLNEKDMNKIKEKIRRLCETVHNK) form a coiled coil. S904 carries the post-translational modification Phosphoserine.

It belongs to the WAPL family. As to quaternary structure, interacts with the cohesin complex throughout the cell cycle; interacts with both chromatin-bound and soluble pools of the complex. Interacts with RAD21; the interaction is direct. Interacts with PDS5A; the interaction is direct, cohesin-dependent and competitive with CDCA5/SORORIN. Interacts (via FGF motifs) with PDS5B; the interaction is direct. Interacts with a SMC1 protein (SMC1A or SMC1B) and SMC3. In terms of assembly, (Microbial infection) Isoform 2 interacts with Epstein-Barr virus EBNA2. In terms of processing, deubiquitinated by USP37; leading to stabilization. Isoform 1 is highly expressed in uterine cervix tumor. Isoform 2 is widely expressed with a high level in skeletal muscle and heart.

Its subcellular location is the nucleus. It localises to the chromosome. The protein resides in the cytoplasm. In terms of biological role, regulator of sister chromatid cohesion in mitosis which negatively regulates cohesin association with chromatin. Involved in both sister chromatid cohesion during interphase and sister-chromatid resolution during early stages of mitosis. Couples DNA replication to sister chromatid cohesion. Cohesion ensures that chromosome partitioning is accurate in both meiotic and mitotic cells and plays an important role in DNA repair. This Homo sapiens (Human) protein is Wings apart-like protein homolog.